Here is a 162-residue protein sequence, read N- to C-terminus: Transcription elongation factor GreB (162 aa).

Residues 52–73 (KKLLREIDRRVRYLRKRLEDVK) are a coiled coil.

This sequence belongs to the GreA/GreB family. GreB subfamily.

In terms of biological role, necessary for efficient RNA polymerase transcription elongation past template-encoded arresting sites. The arresting sites in DNA have the property of trapping a certain fraction of elongating RNA polymerases that pass through, resulting in locked ternary complexes. Cleavage of the nascent transcript by cleavage factors such as GreA or GreB allows the resumption of elongation from the new 3'terminus. GreB releases sequences of up to 9 nucleotides in length. The chain is Transcription elongation factor GreB from Pseudomonas putida (strain ATCC 47054 / DSM 6125 / CFBP 8728 / NCIMB 11950 / KT2440).